Here is a 345-residue protein sequence, read N- to C-terminus: Dimethyladenosine transferase 1, mitochondrial (345 aa).

The transit peptide at 1–27 (MAAPGKLSTCRLPPLPTIREIIKLFRL) directs the protein to the mitochondrion. Residues Leu-38, Gly-63, Glu-85, Lys-86, Asp-111, Val-112, and Asn-141 each contribute to the S-adenosyl-L-methionine site.

This sequence belongs to the class I-like SAM-binding methyltransferase superfamily. rRNA adenine N(6)-methyltransferase family. KsgA subfamily. In terms of assembly, interacts with mitochondrial RNA polymerase POLRMT. Interacts with TFAM. Bound to the maturing mtSSU until the late stages of assembly.

It is found in the mitochondrion. It catalyses the reaction adenosine(N)/adenosine(N+1) in rRNA + 4 S-adenosyl-L-methionine = N(6)-dimethyladenosine(N)/N(6)-dimethyladenosine(N+1) in rRNA + 4 S-adenosyl-L-homocysteine + 4 H(+). Mitochondrial methyltransferase which uses S-adenosyl methionine to dimethylate two highly conserved adjacent adenosine residues (A1583 and A1584) within the loop of helix 45 at the 3-prime end of 12S rRNA, thereby regulating the assembly or stability of the small subunit of the mitochondrial ribosome. Also required for basal transcription of mitochondrial DNA, probably via its interaction with POLRMT and TFAM. Stimulates transcription independently of the methyltransferase activity. This is Dimethyladenosine transferase 1, mitochondrial (TFB1M) from Macaca fascicularis (Crab-eating macaque).